A 782-amino-acid chain; its full sequence is Coiled-coil alpha-helical rod protein 1 (782 aa).

Basic and acidic residues-rich tracts occupy residues 62-74 (ERDV…EPGR) and 208-218 (ETRRAGEAKEL). 2 disordered regions span residues 62–82 (ERDV…WGLE) and 191–218 (SSLT…AKEL). Coiled coils occupy residues 82–314 (EGSQ…ELTR), 344–435 (LMVQ…VVNA), and 498–691 (VADV…QQEG).

It localises to the cytoplasm. Its subcellular location is the nucleus. May be a regulator of keratinocyte proliferation or differentiation. The chain is Coiled-coil alpha-helical rod protein 1 (CCHCR1) from Pongo pygmaeus (Bornean orangutan).